A 1069-amino-acid chain; its full sequence is Carbamoyl phosphate synthase large chain (1069 aa).

Residues 1–401 (MPLNKDIKKV…AFLKGIRSLE (401 aa)) are carboxyphosphate synthetic domain. ATP is bound by residues Arg129, Arg169, Gly175, Gly176, Lys208, Val210, Glu215, Gly241, Ile242, His243, Gln284, and Glu298. One can recognise an ATP-grasp 1 domain in the interval 133-327 (RDMMNRIGEP…IAKLAAKIAL (195 aa)). Mg(2+)-binding residues include Gln284, Glu298, and Asn300. 3 residues coordinate Mn(2+): Gln284, Glu298, and Asn300. The oligomerization domain stretch occupies residues 402-549 (IGKYSLDHNK…YSTYEQYDEV (148 aa)). The segment at 550-932 (EVSNNKKVIV…ALYKGFVGAY (383 aa)) is carbamoyl phosphate synthetic domain. In terms of domain architecture, ATP-grasp 2 spans 674–864 (DELLERLGIS…IVDLATQVML (191 aa)). Arg710, Lys749, Leu751, Glu755, Gly780, Val781, His782, Ser783, Gln823, and Glu835 together coordinate ATP. Residues Gln823, Glu835, and Asn837 each contribute to the Mg(2+) site. Gln823, Glu835, and Asn837 together coordinate Mn(2+). The 138-residue stretch at 932-1069 (YMYPSKEKGK…KDLEVFNIAK (138 aa)) folds into the MGS-like domain. The allosteric domain stretch occupies residues 933–1069 (MYPSKEKGKI…KDLEVFNIAK (137 aa)).

It belongs to the CarB family. As to quaternary structure, composed of two chains; the small (or glutamine) chain promotes the hydrolysis of glutamine to ammonia, which is used by the large (or ammonia) chain to synthesize carbamoyl phosphate. Tetramer of heterodimers (alpha,beta)4. Requires Mg(2+) as cofactor. It depends on Mn(2+) as a cofactor.

It carries out the reaction hydrogencarbonate + L-glutamine + 2 ATP + H2O = carbamoyl phosphate + L-glutamate + 2 ADP + phosphate + 2 H(+). It catalyses the reaction hydrogencarbonate + NH4(+) + 2 ATP = carbamoyl phosphate + 2 ADP + phosphate + 2 H(+). Its pathway is amino-acid biosynthesis; L-arginine biosynthesis; carbamoyl phosphate from bicarbonate: step 1/1. It functions in the pathway pyrimidine metabolism; UMP biosynthesis via de novo pathway; (S)-dihydroorotate from bicarbonate: step 1/3. Functionally, large subunit of the glutamine-dependent carbamoyl phosphate synthetase (CPSase). CPSase catalyzes the formation of carbamoyl phosphate from the ammonia moiety of glutamine, carbonate, and phosphate donated by ATP, constituting the first step of 2 biosynthetic pathways, one leading to arginine and/or urea and the other to pyrimidine nucleotides. The large subunit (synthetase) binds the substrates ammonia (free or transferred from glutamine from the small subunit), hydrogencarbonate and ATP and carries out an ATP-coupled ligase reaction, activating hydrogencarbonate by forming carboxy phosphate which reacts with ammonia to form carbamoyl phosphate. The sequence is that of Carbamoyl phosphate synthase large chain from Clostridium beijerinckii (strain ATCC 51743 / NCIMB 8052) (Clostridium acetobutylicum).